Here is a 623-residue protein sequence, read N- to C-terminus: Glutamine--fructose-6-phosphate aminotransferase [isomerizing] (623 aa).

Residue Cys2 is the Nucleophile; for GATase activity of the active site. Residues 2-228 enclose the Glutamine amidotransferase type-2 domain; it reads CGIVGYIGQA…NDQVVTITAD (227 aa). SIS domains are found at residues 295-435 and 468-613; these read IDES…LRGN and LGRS…VDQP. Residue Lys618 is the For Fru-6P isomerization activity of the active site.

In terms of assembly, homodimer.

The protein localises to the cytoplasm. The catalysed reaction is D-fructose 6-phosphate + L-glutamine = D-glucosamine 6-phosphate + L-glutamate. Functionally, catalyzes the first step in hexosamine metabolism, converting fructose-6P into glucosamine-6P using glutamine as a nitrogen source. In Corynebacterium efficiens (strain DSM 44549 / YS-314 / AJ 12310 / JCM 11189 / NBRC 100395), this protein is Glutamine--fructose-6-phosphate aminotransferase [isomerizing].